The sequence spans 206 residues: Probable peptidyl-tRNA hydrolase (206 aa).

His-48 (proton acceptor) is an active-site residue. TRNA-binding residues include Tyr-83, Asn-85, and Asn-137.

The protein belongs to the PTH family.

The protein localises to the mitochondrion. It catalyses the reaction an N-acyl-L-alpha-aminoacyl-tRNA + H2O = an N-acyl-L-amino acid + a tRNA + H(+). In terms of biological role, peptidyl-tRNA hydrolase involved in the recycling of tRNA-Lys from diacetyl-lysyl-tRNA-Lys and is important for mitochondrial function. The chain is Probable peptidyl-tRNA hydrolase (pth1) from Schizosaccharomyces pombe (strain 972 / ATCC 24843) (Fission yeast).